Here is a 160-residue protein sequence, read N- to C-terminus: MARPRPAEFEKKKVVAENRRARFDYFLEQFFEAGIALTGTEVKSLRFGEGSIAESYAEVKDDQVWLVNSNVPEFSHGNRFNHEPKRPRKLLLHAREIDKMRNGVSREGMTLIPLSIYFNGRGRAKVELALAKGKKLHDKRDTEKERDWKREQQRLLRDRG.

The disordered stretch occupies residues 133–160; sequence GKKLHDKRDTEKERDWKREQQRLLRDRG. Basic and acidic residues predominate over residues 138-160; that stretch reads DKRDTEKERDWKREQQRLLRDRG.

Belongs to the SmpB family.

It localises to the cytoplasm. Functionally, required for rescue of stalled ribosomes mediated by trans-translation. Binds to transfer-messenger RNA (tmRNA), required for stable association of tmRNA with ribosomes. tmRNA and SmpB together mimic tRNA shape, replacing the anticodon stem-loop with SmpB. tmRNA is encoded by the ssrA gene; the 2 termini fold to resemble tRNA(Ala) and it encodes a 'tag peptide', a short internal open reading frame. During trans-translation Ala-aminoacylated tmRNA acts like a tRNA, entering the A-site of stalled ribosomes, displacing the stalled mRNA. The ribosome then switches to translate the ORF on the tmRNA; the nascent peptide is terminated with the 'tag peptide' encoded by the tmRNA and targeted for degradation. The ribosome is freed to recommence translation, which seems to be the essential function of trans-translation. The sequence is that of SsrA-binding protein from Rhizorhabdus wittichii (strain DSM 6014 / CCUG 31198 / JCM 15750 / NBRC 105917 / EY 4224 / RW1) (Sphingomonas wittichii).